Here is a 403-residue protein sequence, read N- to C-terminus: tRNA pseudouridine synthase D (403 aa).

Residues 1–10 are compositionally biased toward basic and acidic residues; that stretch reads MTVQVQDHDI. Positions 1–24 are disordered; the sequence is MTVQVQDHDITTAADTAKLPQPMQ. Residue D92 is the Nucleophile of the active site. The TRUD domain maps to 192-354; that stretch reads GVPNYFGPQR…IKAQRRALRL (163 aa). The segment at 217–240 is disordered; sequence ARPVPESRPQPNKGKRKRVPREQN.

It belongs to the pseudouridine synthase TruD family.

The catalysed reaction is uridine(13) in tRNA = pseudouridine(13) in tRNA. Functionally, responsible for synthesis of pseudouridine from uracil-13 in transfer RNAs. This chain is tRNA pseudouridine synthase D, found in Psychrobacter arcticus (strain DSM 17307 / VKM B-2377 / 273-4).